Here is a 94-residue protein sequence, read N- to C-terminus: Integration host factor subunit beta (94 aa).

It belongs to the bacterial histone-like protein family. Heterodimer of an alpha and a beta chain.

Its function is as follows. This protein is one of the two subunits of integration host factor, a specific DNA-binding protein that functions in genetic recombination as well as in transcriptional and translational control. The sequence is that of Integration host factor subunit beta from Dechloromonas aromatica (strain RCB).